Consider the following 276-residue polypeptide: HTH-type transcriptional activator RhaR (276 aa).

Residues 174–272 (ESLFSALNQS…SCTPTEYRSR (99 aa)) form the HTH araC/xylS-type domain. 2 DNA-binding regions (H-T-H motif) span residues 191–212 (ADFC…KQQT) and 239–262 (VANI…GKTF).

In terms of assembly, binds DNA as a dimer.

It is found in the cytoplasm. Functionally, activates expression of the rhaSR operon in response to L-rhamnose. This is HTH-type transcriptional activator RhaR from Mannheimia succiniciproducens (strain KCTC 0769BP / MBEL55E).